Here is a 153-residue protein sequence, read N- to C-terminus: NAD(P)H-quinone oxidoreductase subunit N (153 aa).

Belongs to the complex I NdhN subunit family. In terms of assembly, NDH-1 can be composed of about 15 different subunits; different subcomplexes with different compositions have been identified which probably have different functions.

The protein localises to the cellular thylakoid membrane. The catalysed reaction is a plastoquinone + NADH + (n+1) H(+)(in) = a plastoquinol + NAD(+) + n H(+)(out). It catalyses the reaction a plastoquinone + NADPH + (n+1) H(+)(in) = a plastoquinol + NADP(+) + n H(+)(out). Functionally, NDH-1 shuttles electrons from an unknown electron donor, via FMN and iron-sulfur (Fe-S) centers, to quinones in the respiratory and/or the photosynthetic chain. The immediate electron acceptor for the enzyme in this species is believed to be plastoquinone. Couples the redox reaction to proton translocation, and thus conserves the redox energy in a proton gradient. Cyanobacterial NDH-1 also plays a role in inorganic carbon-concentration. This is NAD(P)H-quinone oxidoreductase subunit N from Synechococcus sp. (strain CC9605).